A 432-amino-acid chain; its full sequence is D-amino acid dehydrogenase (432 aa).

An FAD-binding site is contributed by 3 to 17 (VVVLGSGVVGVASAW).

Belongs to the DadA oxidoreductase family. The cofactor is FAD.

It catalyses the reaction a D-alpha-amino acid + A + H2O = a 2-oxocarboxylate + AH2 + NH4(+). It participates in amino-acid degradation; D-alanine degradation; NH(3) and pyruvate from D-alanine: step 1/1. Oxidative deamination of D-amino acids. In Cronobacter sakazakii (strain ATCC BAA-894) (Enterobacter sakazakii), this protein is D-amino acid dehydrogenase.